Reading from the N-terminus, the 194-residue chain is Putative manganese efflux pump MntP (194 aa).

The next 6 helical transmembrane spans lie at 3-23 (PITTLLIGIAMSTDAFAAAIG), 37-57 (LYVAVIFGVIETATPIAGWLL), 65-85 (IATFDHWIAFGLLGGLGIHMI), 112-132 (LAATALATSIDAAAIGISMAF), 137-157 (IGIVAAVIGLCTFTMVIFGVM), and 170-190 (AEIVGGIILIIVGSTILYEHL).

Belongs to the MntP (TC 9.B.29) family.

The protein localises to the cell inner membrane. Its function is as follows. Probably functions as a manganese efflux pump. The sequence is that of Putative manganese efflux pump MntP from Xylella fastidiosa (strain M23).